The following is a 1196-amino-acid chain: DNA-directed RNA polymerase subunit beta (1196 aa).

The protein belongs to the RNA polymerase beta chain family. In terms of assembly, the RNAP catalytic core consists of 2 alpha, 1 beta, 1 beta' and 1 omega subunit. When a sigma factor is associated with the core the holoenzyme is formed, which can initiate transcription.

It carries out the reaction RNA(n) + a ribonucleoside 5'-triphosphate = RNA(n+1) + diphosphate. Functionally, DNA-dependent RNA polymerase catalyzes the transcription of DNA into RNA using the four ribonucleoside triphosphates as substrates. The polypeptide is DNA-directed RNA polymerase subunit beta (Lactococcus lactis subsp. cremoris (strain MG1363)).